Consider the following 249-residue polypeptide: uncharacterized protein (249 aa).

The next 2 helical transmembrane spans lie at 49-69 (ILLS…CYLL) and 223-243 (IVMS…VHHL).

The protein localises to the cell membrane. This is an uncharacterized protein from Bacillus anthracis.